The primary structure comprises 362 residues: Bifunctional nitrilase/nitrile hydratase NIT4 (362 aa).

Positions 31-307 (VRATVVQAST…EALITADLDL (277 aa)) constitute a CN hydrolase domain. Catalysis depends on Glu-71, which acts as the Proton acceptor. The Proton donor role is filled by Lys-162. Cys-196 serves as the catalytic Nucleophile.

Belongs to the carbon-nitrogen hydrolase superfamily. Nitrilase family.

It carries out the reaction a nitrile + 2 H2O = a carboxylate + NH4(+). The enzyme catalyses 3-cyano-L-alanine + 2 H2O = L-aspartate + NH4(+). Its function is as follows. Highly specific for beta-cyano-L-alanine (Ala(CN)). Low activity with 3-phenylpropionitrile (PPN). Not associated with auxin production but may be involved in cyanide detoxification. The chain is Bifunctional nitrilase/nitrile hydratase NIT4 (NIT4) from Oryza sativa subsp. japonica (Rice).